A 467-amino-acid chain; its full sequence is Protein arginine methyltransferase NDUFAF7 homolog, mitochondrial (467 aa).

The protein belongs to the NDUFAF7 family.

The protein localises to the mitochondrion. The catalysed reaction is L-arginyl-[protein] + 2 S-adenosyl-L-methionine = N(omega),N(omega)'-dimethyl-L-arginyl-[protein] + 2 S-adenosyl-L-homocysteine + 2 H(+). Arginine methyltransferase involved in the assembly or stability of mitochondrial NADH:ubiquinone oxidoreductase complex (complex I). In Schizosaccharomyces pombe (strain 972 / ATCC 24843) (Fission yeast), this protein is Protein arginine methyltransferase NDUFAF7 homolog, mitochondrial.